The chain runs to 201 residues: ADP-ribosylation factor-like protein 4D (201 aa).

The N-myristoyl glycine moiety is linked to residue Gly2. Residues 28–35, 76–80, and 135–138 each bind GTP; these read GLDSAGKT, DVGGQ, and NKQD.

This sequence belongs to the small GTPase superfamily. Arf family. In terms of assembly, interacts with CYTH2; the interaction is direct and ARL4D GTP-dependent. Does not interact with ARL4D.

It is found in the nucleus. The protein resides in the nucleolus. Its subcellular location is the cell membrane. The protein localises to the cytoplasm. Functionally, small GTP-binding protein which cycles between an inactive GDP-bound and an active GTP-bound form, and the rate of cycling is regulated by guanine nucleotide exchange factors (GEF) and GTPase-activating proteins (GAP). GTP-binding protein that does not act as an allosteric activator of the cholera toxin catalytic subunit. Recruits CYTH1, CYTH2, CYTH3 and CYTH4 to the plasma membrane in GDP-bound form. This is ADP-ribosylation factor-like protein 4D (ARL4D) from Homo sapiens (Human).